A 145-amino-acid polypeptide reads, in one-letter code: MRKFNVNVNGTVYTVEVEEVGGAVTAAPAAPAAPAAAPAAAPVAAAPAAAPAPAPAAAPAAAPAPAAKPAAAAPAGSVTVSAPMPGKILSVNVKPGDKVEAGDVLLILEAMKMQNEIMAPEDGTVSEVRVNAGDTVATGDVMVIL.

The disordered stretch occupies residues 52–82; it reads APAPAAAPAAAPAPAAKPAAAAPAGSVTVSA. Over residues 57 to 75 the composition is skewed to low complexity; that stretch reads AAPAAAPAPAAKPAAAAPA. Residues 77–145 enclose the Biotinyl-binding domain; sequence SVTVSAPMPG…VATGDVMVIL (69 aa). At K112 the chain carries N6-biotinyllysine.

Heterooctamer consisting of two alpha, two beta, two gamma and two delta subunits. The cofactor is biotin.

The enzyme catalyses (2E)-glutaconyl-CoA + Na(+)(in) + H(+) = (2E)-butenoyl-CoA + Na(+)(out) + CO2. The protein operates within amino-acid degradation; L-glutamate degradation via hydroxyglutarate pathway; crotonoyl-CoA from L-glutamate: step 5/5. In terms of biological role, biotin carrier subunit of the primary sodium pump glutaconyl-CoA decarboxylase (GCD). This chain is Glutaconyl-CoA decarboxylase subunit gamma (gcdC), found in Acidaminococcus fermentans (strain ATCC 25085 / DSM 20731 / CCUG 9996 / CIP 106432 / VR4).